We begin with the raw amino-acid sequence, 310 residues long: B3 domain-containing protein At4g02870 (310 aa).

A compositionally biased stretch (polar residues) spans methionine 1–valine 21. The tract at residues methionine 1–valine 39 is disordered. Positions arginine 205 to asparagine 300 form a DNA-binding region, TF-B3.

The protein resides in the nucleus. The sequence is that of B3 domain-containing protein At4g02870 (ARF42) from Arabidopsis thaliana (Mouse-ear cress).